The chain runs to 278 residues: MSVPTVLQKILARKAEEVAERRARVNLAEVERLARSADAPRGFANALLERAKRKEPAVIAEIKKASPSKGVLREHFVPAEIARSYEAGGAACLSVLTDVDFFQGADAYLKEARAACALPVIRKDFMIDPYQIVEARAIGADCILLIVSALDDVLMAELAATAKSVGLDVLVEVHDGTELERALKTLDTPLVGINNRNLHTFEVSLETTLDLLPEIPRDRLVVTESGILNRADVELMEVSEVYAFLVGEAFMRADDPGLELKRLFFQERGGVVLGADPD.

Belongs to the TrpC family.

It carries out the reaction 1-(2-carboxyphenylamino)-1-deoxy-D-ribulose 5-phosphate + H(+) = (1S,2R)-1-C-(indol-3-yl)glycerol 3-phosphate + CO2 + H2O. It participates in amino-acid biosynthesis; L-tryptophan biosynthesis; L-tryptophan from chorismate: step 4/5. This chain is Indole-3-glycerol phosphate synthase, found in Pseudomonas aeruginosa (strain LESB58).